The sequence spans 277 residues: 3-methyl-2-oxobutanoate hydroxymethyltransferase (277 aa).

Mg(2+)-binding residues include aspartate 43 and aspartate 82. 3-methyl-2-oxobutanoate contacts are provided by residues 43-44 (DS), aspartate 82, and lysine 112. Glutamate 114 provides a ligand contact to Mg(2+). The active-site Proton acceptor is the glutamate 181.

The protein belongs to the PanB family. In terms of assembly, homodecamer; pentamer of dimers. Mg(2+) serves as cofactor.

It is found in the cytoplasm. It catalyses the reaction 3-methyl-2-oxobutanoate + (6R)-5,10-methylene-5,6,7,8-tetrahydrofolate + H2O = 2-dehydropantoate + (6S)-5,6,7,8-tetrahydrofolate. Its pathway is cofactor biosynthesis; (R)-pantothenate biosynthesis; (R)-pantoate from 3-methyl-2-oxobutanoate: step 1/2. Functionally, catalyzes the reversible reaction in which hydroxymethyl group from 5,10-methylenetetrahydrofolate is transferred onto alpha-ketoisovalerate to form ketopantoate. This is 3-methyl-2-oxobutanoate hydroxymethyltransferase from Listeria monocytogenes serotype 4a (strain HCC23).